The following is a 394-amino-acid chain: Phosphopentomutase (394 aa).

Residues Asp-14, Asp-287, His-292, Asp-328, His-329, and His-340 each contribute to the Mn(2+) site.

Belongs to the phosphopentomutase family. It depends on Mn(2+) as a cofactor.

Its subcellular location is the cytoplasm. It carries out the reaction 2-deoxy-alpha-D-ribose 1-phosphate = 2-deoxy-D-ribose 5-phosphate. It catalyses the reaction alpha-D-ribose 1-phosphate = D-ribose 5-phosphate. The protein operates within carbohydrate degradation; 2-deoxy-D-ribose 1-phosphate degradation; D-glyceraldehyde 3-phosphate and acetaldehyde from 2-deoxy-alpha-D-ribose 1-phosphate: step 1/2. Its function is as follows. Isomerase that catalyzes the conversion of deoxy-ribose 1-phosphate (dRib-1-P) and ribose 1-phosphate (Rib-1-P) to deoxy-ribose 5-phosphate (dRib-5-P) and ribose 5-phosphate (Rib-5-P), respectively. The polypeptide is Phosphopentomutase (Listeria monocytogenes serotype 4b (strain CLIP80459)).